Consider the following 193-residue polypeptide: Sporulation-specific transcriptional regulator GerR (193 aa).

Residues 1–61 (MTITRQDAWT…RWNSYVRKQY (61 aa)) enclose the HTH myb-type domain. Positions 35 to 57 (FEEVGRALTRTAAACGFRWNSYV) form a DNA-binding region, H-T-H motif. A coiled-coil region spans residues 122 to 177 (AQEFQLEREKLKEQIQSLQKELEDLRSENQTLRNQLEMTEEDYKALIDIMDRARKM).

The protein belongs to the RsfA transcriptional regulator family.

Its function is as follows. Transcriptional factor that regulates the expression of several late sporulation genes. Controls genes of both sigma-E and sigma-K regulons, acting alone on some genes and in conjunction with SpoIIID or GerE on others. Regulates, directly or indirectly, the expression of genes encoding coat proteins such as cgeA, cotB, cotC, cotG, cotU and cotY. Controls late sporulation genes in two ways: directly, by binding to the promoter region of genes such as cotB, cotU and spoVIF, and acting directly on their transcription, and indirectly, through the activation of SpoVIF, which stabilizes the transcriptional activator GerE and consequently induces the expression of the GerE-dependent genes, such as cotC and cotG. Its effect is strongly positive on spoVIF, cotC, and cotG, weakly positive on cotB, and negative on cotU. The chain is Sporulation-specific transcriptional regulator GerR from Bacillus subtilis (strain 168).